The sequence spans 308 residues: Dual oxidase maturation factor 1 (308 aa).

Residues 1 to 21 (MQANIFPFYPQPRTSFKFDTK) are Extracellular-facing. The helical transmembrane segment at 22–42 (IIEIIIICIVTACTFIIILPG) threads the bilayer. Over 43 to 49 (IRGKSRS) the chain is Cytoplasmic. The helical transmembrane segment at 50–70 (IWLFRILTSLFIGAVILAVNF) threads the bilayer. The Extracellular portion of the chain corresponds to 71-172 (TSDWETGIVT…SPCGLFQQYC (102 aa)). Residues asparagine 94, asparagine 107, and asparagine 119 are each glycosylated (N-linked (GlcNAc...) asparagine). A helical membrane pass occupies residues 173–195 (ISTYYSSEIMWVAFGSWILYNVL). At 196–199 (FSMP) the chain is on the cytoplasmic side. The helical transmembrane segment at 200-220 (VILYGICMMFVTAICMLVSLI) threads the bilayer. Over 221–247 (SFASVRQAPVCNIHFGNAVLKTHFGVS) the chain is Extracellular. A helical membrane pass occupies residues 248-268 (YWLSLVTGLFCLIVSLVLLFL). The Cytoplasmic portion of the chain corresponds to 269 to 308 (YKTQPKVIRLIFSYGEEEDLSDKSENEEEHSSALSLNEML).

The protein belongs to the DUOXA family.

The protein resides in the membrane. Possible role in maturation and transport from the endoplasmic reticulum to the plasma membrane of functional dual oxidase. The chain is Dual oxidase maturation factor 1 (duoxa1) from Xenopus tropicalis (Western clawed frog).